Here is a 283-residue protein sequence, read N- to C-terminus: 2-dehydro-3-deoxyphosphooctonate aldolase (283 aa).

Belongs to the KdsA family.

It localises to the cytoplasm. It catalyses the reaction D-arabinose 5-phosphate + phosphoenolpyruvate + H2O = 3-deoxy-alpha-D-manno-2-octulosonate-8-phosphate + phosphate. It functions in the pathway carbohydrate biosynthesis; 3-deoxy-D-manno-octulosonate biosynthesis; 3-deoxy-D-manno-octulosonate from D-ribulose 5-phosphate: step 2/3. The protein operates within bacterial outer membrane biogenesis; lipopolysaccharide biosynthesis. This Vibrio cholerae serotype O1 (strain ATCC 39315 / El Tor Inaba N16961) protein is 2-dehydro-3-deoxyphosphooctonate aldolase.